We begin with the raw amino-acid sequence, 963 residues long: Ubiquitin carboxyl-terminal hydrolase 4 (963 aa).

A DUSP domain is found at 11–122 (PDAETQKSEL…GQQPIVRKVV (112 aa)). The necessary for interaction with SART3 stretch occupies residues 27–216 (TLQRGAQWYL…LYQGQVLVIE (190 aa)). Residues 133–141 (VEVYLLELK) carry the Nuclear export signal motif. The 85-residue stretch at 142-226 (LCENSDPTNV…PQNEDGTWPR (85 aa)) folds into the Ubiquitin-like 1 domain. A disordered region spans residues 219 to 277 (NEDGTWPRQTQQSKSSTAPSRNFTTSPKSSASPYSSVSASPIANGDSTNTSGMHSSGVS). The span at 225–243 (PRQTQQSKSSTAPSRNFTT) shows a compositional bias: polar residues. The interval 229–295 (QQSKSSTAPS…SYNCQESPLT (67 aa)) is required for USP4 activation by providing conformational flexibility between the DUSP and catalytic domains. Over residues 244–261 (SPKSSASPYSSVSASPIA) the composition is skewed to low complexity. In terms of domain architecture, USP spans 302–923 (CGLGNLGNTC…AAYVLFYQRR (622 aa)). Cys-311 acts as the Nucleophile in catalysis. Residues 384–386 (PQF) are regulates ubiquitin dissociation. The tract at residues 405–407 (LHE) is necessary for interaction with RBL2. Ser-445 carries the phosphoserine modification. A necessary for interaction with RB1 and RBL2 region spans residues 459–463 (LVCPE). Zn(2+)-binding residues include Cys-461 and Cys-464. The Ubiquitin-like 2 domain maps to 483-571 (LKKDRVMEIF…IFVYEVCSTS (89 aa)). The interval 485-775 (KDRVMEIFLV…LQPQKKKKTA (291 aa)) is interacts with DUSP and ubiquitin-like 1 domains and is required for USP4 activation. The interval 634–701 (PLPDESGSSP…ATQKKNKGRP (68 aa)) is disordered. Phosphoserine occurs at positions 675 and 680. The Nuclear localization signal signature appears at 767 to 772 (QPQKKK). The Zn(2+) site is built by Cys-799 and Cys-802. His-881 (proton acceptor) is an active-site residue. Residues 930-963 (TPSLSFPGSSDGGARPSSSQQGTGDDETYSMDTN) form a disordered region. The span at 953–963 (GDDETYSMDTN) shows a compositional bias: acidic residues.

The protein belongs to the peptidase C19 family. USP4 subfamily. As to quaternary structure, interacts with RB1 (both dephosphorylated and hypophosphorylated forms). Interacts with RBL1 and RBL2. Interacts with ADORA2A (via cytoplasmic C-terminus); the interaction is direct. Interacts with SART3; recruits USP4 to its substrate PRPF3. Phosphorylated at Ser-445 by PKB/AKT1 in response to EGF stimulus, promoting its ability deubiquitinate RHEB. Post-translationally, monoubiquitinated by TRIM21. Ubiquitination does not lead to its proteasomal degradation. Autodeubiquitinated.

The protein localises to the cytoplasm. It localises to the nucleus. The enzyme catalyses Thiol-dependent hydrolysis of ester, thioester, amide, peptide and isopeptide bonds formed by the C-terminal Gly of ubiquitin (a 76-residue protein attached to proteins as an intracellular targeting signal).. Its activity is regulated as follows. The completion of the deubiquitinase reaction is mediated by the DUSP and ubiquitin-like 1 domains which promotes the release of ubiquitin from the catalytic site enabling subsequent reactions to occur. Its function is as follows. Deubiquitinating enzyme that removes conjugated ubiquitin from target proteins. Deubiquitinates PDPK1. Deubiquitinates TRIM21. Deubiquitinates receptor ADORA2A which increases the amount of functional receptor at the cell surface. Deubiquitinates HAS2. Deubiquitinates RHEB in response to EGF signaling, promoting mTORC1 signaling. May regulate mRNA splicing through deubiquitination of the U4 spliceosomal protein PRPF3. This may prevent its recognition by the U5 component PRPF8 thereby destabilizing interactions within the U4/U6.U5 snRNP. May also play a role in the regulation of quality control in the ER. This chain is Ubiquitin carboxyl-terminal hydrolase 4 (USP4), found in Bos taurus (Bovine).